Consider the following 61-residue polypeptide: MDPNCSCVAGESCTCAGSCKCKQCRCASCKKSCCSCCPVGCAKCAQGCVCKGASDKCSCCA.

Residues 1 to 29 (MDPNCSCVAGESCTCAGSCKCKQCRCASC) form a beta region. The a divalent metal cation site is built by cysteine 5, cysteine 7, cysteine 13, cysteine 15, cysteine 19, cysteine 21, cysteine 24, cysteine 26, cysteine 29, cysteine 33, cysteine 34, cysteine 36, cysteine 37, cysteine 41, cysteine 44, cysteine 48, cysteine 50, cysteine 57, cysteine 59, and cysteine 60. An alpha region spans residues 30–61 (KKSCCSCCPVGCAKCAQGCVCKGASDKCSCCA).

The protein belongs to the metallothionein superfamily. Type 1 family.

Functionally, metallothioneins have a high content of cysteine residues that bind various heavy metals; these proteins are transcriptionally regulated by both heavy metals and glucocorticoids. The chain is Metallothionein-1B from Equus caballus (Horse).